Reading from the N-terminus, the 141-residue chain is Nucleoside triphosphatase NudI (141 aa).

The region spanning 1-141 (MRQRTIVCPL…RKTLRLKGLL (141 aa)) is the Nudix hydrolase domain. The Nudix box signature appears at 38-59 (GGVESGERIEEALRREIREELG).

The protein belongs to the Nudix hydrolase family. NudI subfamily. In terms of assembly, monomer. Mg(2+) is required as a cofactor.

It carries out the reaction a ribonucleoside 5'-triphosphate + H2O = a ribonucleoside 5'-phosphate + diphosphate + H(+). The enzyme catalyses a 2'-deoxyribonucleoside 5'-triphosphate + H2O = a 2'-deoxyribonucleoside 5'-phosphate + diphosphate + H(+). It catalyses the reaction dUTP + H2O = dUMP + diphosphate + H(+). The catalysed reaction is dTTP + H2O = dTMP + diphosphate + H(+). It carries out the reaction dCTP + H2O = dCMP + diphosphate + H(+). Its function is as follows. Catalyzes the hydrolysis of nucleoside triphosphates, with a preference for pyrimidine deoxynucleoside triphosphates (dUTP, dTTP and dCTP). In Shigella flexneri serotype 5b (strain 8401), this protein is Nucleoside triphosphatase NudI.